We begin with the raw amino-acid sequence, 127 residues long: Large ribosomal subunit protein bL20 (127 aa).

Belongs to the bacterial ribosomal protein bL20 family.

Functionally, binds directly to 23S ribosomal RNA and is necessary for the in vitro assembly process of the 50S ribosomal subunit. It is not involved in the protein synthesizing functions of that subunit. The polypeptide is Large ribosomal subunit protein bL20 (Renibacterium salmoninarum (strain ATCC 33209 / DSM 20767 / JCM 11484 / NBRC 15589 / NCIMB 2235)).